The primary structure comprises 288 residues: uncharacterized protein (288 aa).

The segment covering 1-12 (MTEGRCAQHPDG) has biased composition (basic and acidic residues). The interval 1–20 (MTEGRCAQHPDGLDVQDVCD) is disordered.

It belongs to the class IV-like SAM-binding methyltransferase superfamily. RNA methyltransferase TrmH family.

This is an uncharacterized protein from Mycobacterium bovis (strain ATCC BAA-935 / AF2122/97).